The following is a 323-amino-acid chain: MAPKQDPKPKFQEGERVLCFHGPLLYEAKCVKVAIKDKQVKYFIHYSGWNKNWDEWVPESRVLKYVDANLQKQRELQKANQEQYAEGKMRGAAPGKKTSGLQQKNVEVKTKKNKQKTPGNGDGGSTSETPQPPRKKRARVDPTVENEETFMNRVEVKVKIPEELKPWLVDDWDLITRQKQLFYLPAKKNVDSILEDYANYKKSRGNTDNKEYAVNEVVAGIKEYFNVMLGTQLLYKFERPQYAEILADHPDAPMSQVYGAPHLLRLFVRIGAMLAYTPLDEKSLALLLNYLHDFLKYLAKNSATLFSASDYEVAPPEYHRKAV.

Residues 12 to 62 (QEGERVLCFHGPLLYEAKCVKVAIKDKQVKYFIHYSGWNKNWDEWVPESRV) enclose the Tudor-knot domain. The tract at residues 77-143 (QKANQEQYAE…RKKRARVDPT (67 aa)) is disordered. A sufficient for interaction with SIN3A region spans residues 94–227 (PGKKTSGLQQ…VAGIKEYFNV (134 aa)). An N6-acetyllysine modification is found at lysine 104. The interval 125 to 191 (STSETPQPPR…FYLPAKKNVD (67 aa)) is interaction with RB1-1. Residues 149 to 303 (TFMNRVEVKV…FLKYLAKNSA (155 aa)) form a sufficient for interaction with PHF12 region. Residues 152–323 (NRVEVKVKIP…APPEYHRKAV (172 aa)) enclose the MRG domain. Positions 284 to 305 (LALLLNYLHDFLKYLAKNSATL) are interaction with RB1-2.

As to quaternary structure, component of the NuA4 histone acetyltransferase complex which contains the catalytic subunit KAT5/TIP60 and the subunits EP400, TRRAP/PAF400, BRD8/SMAP, EPC1, DMAP1/DNMAP1, RUVBL1/TIP49, RUVBL2, ING3, actin, ACTL6A/BAF53A, MORF4L1/MRG15, MORF4L2/MRGX, MRGBP, YEATS4/GAS41, VPS72/YL1 and MEAF6. The NuA4 complex interacts with MYC and the adenovirus E1A protein. MORF4L1 may also participate in the formation of NuA4 related complexes which lack the KAT5/TIP60 catalytic subunit, but which include the SWI/SNF related protein SRCAP. Component of the mSin3A histone deacetylase complex, which includes SIN3A, HDAC2, ARID4B, MORF4L1, RBBP4/RbAp48, and RBBP7/RbAp46. May also interact with PHF12 and one or more as yet undefined members of the TLE (transducin-like enhancer of split) family of transcriptional repressors. Component of the SIN3B complex, which includes SIN3B, HDAC2 or HDAC1, PHF12 and MORF4L1. Interacts with RB1 and KAT8. Interacts with the N-terminus of MRFAP1. Found in a complex composed of MORF4L1, MRFAP1 and RB1. Interacts with the entire BRCA complex, which contains BRCA1, PALB2, BRCA2 and RAD51. Interacts with PALB2. Forms a complex with MSL1 and NUPR1.

It localises to the nucleus. Functionally, component of the NuA4 histone acetyltransferase (HAT) complex which is involved in transcriptional activation of select genes principally by acetylation of nucleosomal histones H4 and H2A. This modification may both alter nucleosome - DNA interactions and promote interaction of the modified histones with other proteins which positively regulate transcription. This complex may be required for the activation of transcriptional programs associated with oncogene and proto-oncogene mediated growth induction, tumor suppressor mediated growth arrest and replicative senescence, apoptosis, and DNA repair. The NuA4 complex ATPase and helicase activities seem to be, at least in part, contributed by the association of RUVBL1 and RUVBL2 with EP400. NuA4 may also play a direct role in DNA repair when directly recruited to sites of DNA damage. As part of the SIN3B complex represses transcription and counteracts the histone acetyltransferase activity of EP300 through the recognition H3K27ac marks by PHF12 and the activity of the histone deacetylase HDAC2. SIN3B complex is recruited downstream of the constitutively active genes transcriptional start sites through interaction with histones and mitigates histone acetylation and RNA polymerase II progression within transcribed regions contributing to the regulation of transcription. Required for homologous recombination repair (HRR) and resistance to mitomycin C (MMC). Involved in the localization of PALB2, BRCA2 and RAD51, but not BRCA1, to DNA-damage foci. In Rattus norvegicus (Rat), this protein is Mortality factor 4-like protein 1 (Morf4l1).